Here is a 94-residue protein sequence, read N- to C-terminus: DNA-binding protein HU (94 aa).

The protein belongs to the bacterial histone-like protein family. Homodimer.

Functionally, histone-like DNA-binding protein which is capable of wrapping DNA to stabilize it, and thus to prevent its denaturation under extreme environmental conditions. This chain is DNA-binding protein HU (hup), found in Helicobacter pylori (strain J99 / ATCC 700824) (Campylobacter pylori J99).